Consider the following 592-residue polypeptide: Aspartate--tRNA(Asp/Asn) ligase (592 aa).

Glu-175 is an L-aspartate binding site. The tract at residues 199–202 (QLFK) is aspartate. Arg-221 provides a ligand contact to L-aspartate. Residues 221-223 (RDE) and Gln-230 each bind ATP. His-447 contributes to the L-aspartate binding site. Glu-481 serves as a coordination point for ATP. L-aspartate is bound at residue Arg-488. An ATP-binding site is contributed by 533 to 536 (GIDR).

This sequence belongs to the class-II aminoacyl-tRNA synthetase family. Type 1 subfamily. As to quaternary structure, homodimer.

The protein localises to the cytoplasm. The enzyme catalyses tRNA(Asx) + L-aspartate + ATP = L-aspartyl-tRNA(Asx) + AMP + diphosphate. Functionally, aspartyl-tRNA synthetase with relaxed tRNA specificity since it is able to aspartylate not only its cognate tRNA(Asp) but also tRNA(Asn). Reaction proceeds in two steps: L-aspartate is first activated by ATP to form Asp-AMP and then transferred to the acceptor end of tRNA(Asp/Asn). This Dictyoglomus turgidum (strain DSM 6724 / Z-1310) protein is Aspartate--tRNA(Asp/Asn) ligase.